Here is a 144-residue protein sequence, read N- to C-terminus: MYIKSFSAKSNDFKKMWYCIDATGKILGRLATNIASRLRGKHKVEYTPHVDIGDYLIVINAKNIKVTGKKCTDKFYYHHTGYVGGLKKIAFKDMLHRYPERIIEIAVRGMLPKGPLGRSMFKKLKVYANDNHNHSAQNPKILNI.

This sequence belongs to the universal ribosomal protein uL13 family. In terms of assembly, part of the 50S ribosomal subunit.

Its function is as follows. This protein is one of the early assembly proteins of the 50S ribosomal subunit, although it is not seen to bind rRNA by itself. It is important during the early stages of 50S assembly. The protein is Large ribosomal subunit protein uL13 of Buchnera aphidicola subsp. Baizongia pistaciae (strain Bp).